Here is a 440-residue protein sequence, read N- to C-terminus: MQQIARSVALAFNNLPRPHRVMLGSLTVLTLAVAVWRPYVYHRDATPIVKTIELEQNEIRSLLPEASEPIDQAAQEDEAIPQDELDDKIAGEAGVHEYVVSTGDTLSSILNQYGIDMGDITQLAAADKELRNLKIGQQLSWTLTADGELQRLTWEVSRRETRTYDRTAANGFKMTSEMQQGEWVNNLLKGTVGGSFVASARNAGLTSAEVSAVIKAMQWQMDFRKLKKGDEFAVLMSREMLDGKREQSQLLGVRLRSEGKDYYAIRAEDGKFYDRNGTGLAKGFLRFPTAKQFRISSNFNPRRTNPVTGRVAPHRGVDFAMPQGTPVLSVGDGEVVVAKRSGAAGYYVAIRHGRSYTTRYMHLRKILVKPGQKVKRGDRIALSGNTGRSTGPHLHYEVWINQQAVNPLTAKLPRTEGLTGSDRREFLAQAKEIVPQLRFD.

Residues 21–40 form a helical membrane-spanning segment; the sequence is VMLGSLTVLTLAVAVWRPYV. The LysM domain maps to 96-141; the sequence is HEYVVSTGDTLSSILNQYGIDMGDITQLAAADKELRNLKIGQQLSW. Residue H314 participates in Zn(2+) binding.

It belongs to the peptidase M23B family. It depends on Zn(2+) as a cofactor.

The protein resides in the cell membrane. The protein operates within cell wall biogenesis; cell wall polysaccharide biosynthesis. In terms of biological role, a murein DD-endopeptidase with specificity for D-Ala-meso-diaminopimelic acid (mDAP) cross-links. Its role is probably to cleave D-Ala-mDAP cross-links to allow insertion of new glycans and thus cell wall expansion. Functionally redundant with MepM and MepH. The chain is Murein DD-endopeptidase MepM (mepM) from Escherichia coli O6:H1 (strain CFT073 / ATCC 700928 / UPEC).